The chain runs to 293 residues: Pantothenate synthetase (293 aa).

Position 38-45 (38-45 (MGALHEGH)) interacts with ATP. The Proton donor role is filled by histidine 45. Residue glutamine 69 participates in (R)-pantoate binding. Residue glutamine 69 participates in beta-alanine binding. 155–158 (GEKD) serves as a coordination point for ATP. Glutamine 161 is a (R)-pantoate binding site. 192–195 (QSSR) lines the ATP pocket.

This sequence belongs to the pantothenate synthetase family. Homodimer.

It localises to the cytoplasm. The enzyme catalyses (R)-pantoate + beta-alanine + ATP = (R)-pantothenate + AMP + diphosphate + H(+). It functions in the pathway cofactor biosynthesis; (R)-pantothenate biosynthesis; (R)-pantothenate from (R)-pantoate and beta-alanine: step 1/1. In terms of biological role, catalyzes the condensation of pantoate with beta-alanine in an ATP-dependent reaction via a pantoyl-adenylate intermediate. In Hyphomonas neptunium (strain ATCC 15444), this protein is Pantothenate synthetase.